The following is a 395-amino-acid chain: Zinc-regulated GTPase metalloprotein activator 1B (395 aa).

Residues 1-36 (MLPAVGSADEEEDPAEEDCPELVPMETTQSEEEEKS) are disordered. The span at 8–20 (ADEEEDPAEEDCP) shows a compositional bias: acidic residues. The psi-PxLVp motif signature appears at 17–24 (EDCPELVP). 49–56 (GYLGAGKT) is a GTP binding site. Residues cysteine 107, cysteine 109, and cysteine 110 each coordinate Zn(2+). The CXCC motif signature appears at 107–110 (CLCC). GTP is bound by residues 110–114 (CSVKD) and 203–206 (NKTD). Residues 274-377 (IVTITFEVPG…ILKQLFIATV (104 aa)) form the CobW C-terminal domain.

The protein belongs to the SIMIBI class G3E GTPase family. ZNG1 subfamily.

The protein resides in the nucleus. The enzyme catalyses GTP + H2O = GDP + phosphate + H(+). Zinc chaperone that directly transfers zinc cofactor to target metalloproteins, thereby activating them. Catalyzes zinc insertion into the active site of methionine aminopeptidase METAP1, which function to cleave the initiator methionine from polypeptides during or after protein translation. Mechanistically, the N-terminal psi-PxLVp motif binds to the C6H2-type zinc finger of inactive form of METAP1. After formation of the docked complex, zinc is transferred from the CXCC motif in the GTPase domain of ZNG1B to the zinc binding site in the peptidase domain of METAP1 in a process requiring GTP hydrolysis. GTP/GDP exchange is required for release of active METAP1. This is Zinc-regulated GTPase metalloprotein activator 1B from Homo sapiens (Human).